The chain runs to 191 residues: Glycerol-3-phosphate acyltransferase (191 aa).

A run of 5 helical transmembrane segments spans residues 5–25, 50–70, 78–98, 112–132, and 153–173; these read IVFV…ITKI, CIAA…VYIA, SFHM…PVWL, ILIA…LAVF, and SFFF…LIFF.

The protein belongs to the PlsY family. As to quaternary structure, probably interacts with PlsX.

It is found in the cell membrane. The catalysed reaction is an acyl phosphate + sn-glycerol 3-phosphate = a 1-acyl-sn-glycero-3-phosphate + phosphate. Its pathway is lipid metabolism; phospholipid metabolism. Its function is as follows. Catalyzes the transfer of an acyl group from acyl-phosphate (acyl-PO(4)) to glycerol-3-phosphate (G3P) to form lysophosphatidic acid (LPA). This enzyme utilizes acyl-phosphate as fatty acyl donor, but not acyl-CoA or acyl-ACP. The sequence is that of Glycerol-3-phosphate acyltransferase from Wolbachia sp. subsp. Brugia malayi (strain TRS).